Here is an 87-residue protein sequence, read N- to C-terminus: Acyl carrier protein 3 (87 aa).

The region spanning 1–79 (MSNPTVLDQI…DLVTYIEAAL (79 aa)) is the Carrier domain. S39 is subject to O-(pantetheine 4'-phosphoryl)serine.

Belongs to the acyl carrier protein (ACP) family. 4'-phosphopantetheine is transferred from CoA to a specific serine of apo-ACP by AcpS. This modification is essential for activity because fatty acids are bound in thioester linkage to the sulfhydryl of the prosthetic group.

It is found in the cytoplasm. Its pathway is lipid metabolism; fatty acid biosynthesis. In terms of biological role, carrier of the growing fatty acid chain in fatty acid biosynthesis. The chain is Acyl carrier protein 3 from Ralstonia nicotianae (strain ATCC BAA-1114 / GMI1000) (Ralstonia solanacearum).